Here is a 2262-residue protein sequence, read N- to C-terminus: Klarsicht protein (2262 aa).

Disordered stretches follow at residues 1–140, 345–410, 442–475, 514–561, 800–832, 859–898, 1000–1031, 1115–1157, 1246–1316, and 1533–1670; these read MEMQ…VGND, QQQQ…GEGN, AANGLDDDEDEEEDTEDDSFGYEGEATEDDLNEV, QSQS…PDIG, ATSSVDGLQSTAVSSTTATGGPLPPSDDSDKEN, SNYDSSSACSSSNSNSNSNSNSNGRLTETSATSRVTQLQM, HLPPRSPAKSAKSTKSQASNATVSGSTLVSPV, PSCK…SEGF, SGLA…ELGG, and VRRK…QQSR. Residues 1-1774 are required for apical microtubules localization; the sequence is MEMQQENETG…KPTPELLDTE (1774 aa). The Cytoplasmic segment spans residues 1–2215; the sequence is MEMQQENETG…KRGWAWRIAR (2215 aa). The span at 58 to 67 shows a compositional bias: basic and acidic residues; sequence KIEHTTKPLK. Residues 131–140 are compositionally biased toward polar residues; sequence NYGTNSVGND. Over residues 345 to 402 the composition is skewed to low complexity; it reads QQQQLSSQQPASLTSNCSSESTSESATKSSSLSSGFASDPVTTPIGTAAAAPPSSSTH. Acidic residues predominate over residues 446–475; the sequence is LDDDEDEEEDTEDDSFGYEGEATEDDLNEV. A compositionally biased stretch (low complexity) spans 514–525; that stretch reads QSQSRSQQVPSQ. Positions 546–560 are enriched in acidic residues; it reads EADEELEEEDEDPDI. 2 stretches are compositionally biased toward low complexity: residues 809-818 and 859-881; these read STAVSSTTAT and SNYDSSSACSSSNSNSNSNSNSN. Over residues 882–894 the composition is skewed to polar residues; the sequence is GRLTETSATSRVT. Over residues 1006 to 1018 the composition is skewed to low complexity; that stretch reads PAKSAKSTKSQAS. A compositionally biased stretch (polar residues) spans 1019 to 1028; sequence NATVSGSTLV. Over residues 1246–1259 the composition is skewed to polar residues; sequence SGLASHSISESALD. Residues 1267-1280 show a composition bias toward low complexity; the sequence is PRAASSSGTGSNAA. Residues 1288–1299 show a composition bias toward basic residues; sequence SLRRRKARKKRI. The span at 1550–1559 shows a compositional bias: low complexity; that stretch reads QSDQQQQQLQ. Over residues 1560–1583 the composition is skewed to polar residues; the sequence is VTPSLSASATALMTTPKNQSTSHQ. Composition is skewed to basic and acidic residues over residues 1586–1596 and 1610–1640; these read HRAESVGRKLD and RTSESDTSTRRRRTVTADERRRSSRNLEKCI. Residues 1809-1842 adopt a coiled-coil conformation; sequence LTKQERRLQSALEEQEQQQESEQLKQQKLVEEEK. Positions 2092-2205 are disordered; that stretch reads HQQKQQIQQN…GEGADPAQTS (114 aa). Residues 2093 to 2105 are compositionally biased toward low complexity; it reads QQKQQIQQNQTQQ. The span at 2130–2142 shows a compositional bias: basic residues; sequence RRGKGARKARQAK. Residues 2207 to 2262 form the KASH domain; it reads RGWAWRIARAAVPMQVALFTIFCAACLMQPNCCDNLNNLSMSFTPQLRYIRGPPPI. The chain crosses the membrane as a helical; Anchor for type IV membrane protein span at residues 2216–2236; the sequence is AAVPMQVALFTIFCAACLMQP. At 2237–2262 the chain is on the perinuclear space side; the sequence is NCCDNLNNLSMSFTPQLRYIRGPPPI.

The protein belongs to the nesprin family. In terms of assembly, core component of LINC complexes which are composed of inner nuclear membrane SUN domain-containing proteins coupled to outer nuclear membrane KASH domain-containing nesprins. Interacts with kud. Interacts with Msp300; this interaction allows the anchoring of Msp300 nuclear ring structure to the nuclear envelope. Expressed ubiquitously in the eye disk, but at much higher levels posterior to the morphogenetic furrow. Expressed in R-cells and also in non-neural cone cells.

The protein localises to the cytoplasm. It localises to the cytoskeleton. It is found in the microtubule organizing center. The protein resides in the perinuclear region. Its subcellular location is the nucleus membrane. The protein localises to the nucleus envelope. Component of the LINC (LInker of Nucleoskeleton and Cytoskeleton) complex involved in the connection between the nuclear lamina and the cytoskeleton. Plays a role in the nuclear positioning and links the nucleus to the microtubule organizing center (MTOC). Collaborates with Klar to promote even spacing of the myonuclei at the periphery of striated muscle fibers by mediating a tight association between a nuclear ring structure of Msp300 and the plus ends of a unique astral microtubule (MT) network. The polypeptide is Klarsicht protein (Drosophila melanogaster (Fruit fly)).